Consider the following 303-residue polypeptide: Peroxisomal trans-2-enoyl-CoA reductase (303 aa).

23-47 (VTGGATGIGKAIVKELLELGSNVVI) contacts NADP(+). An N6-succinyllysine modification is found at K32. At S49 the chain carries Phosphoserine. Y179 (proton acceptor) is an active-site residue. Y179 is subject to Phosphotyrosine. Residues 301–303 (AKL) carry the Microbody targeting signal motif.

Belongs to the short-chain dehydrogenases/reductases (SDR) family. In terms of assembly, interacts with PEX5, probably required to target it into peroxisomes.

It is found in the peroxisome. It carries out the reaction a (2E)-enoyl-CoA + NADPH + H(+) = a 2,3-saturated acyl-CoA + NADP(+). The catalysed reaction is (2E)-decenoyl-CoA + NADPH + H(+) = decanoyl-CoA + NADP(+). The enzyme catalyses (2E)-hexenoyl-CoA + NADPH + H(+) = hexanoyl-CoA + NADP(+). It catalyses the reaction (2E)-octenoyl-CoA + NADPH + H(+) = octanoyl-CoA + NADP(+). It carries out the reaction (2E)-dodecenoyl-CoA + NADPH + H(+) = dodecanoyl-CoA + NADP(+). The catalysed reaction is (2E)-tetradecenoyl-CoA + NADPH + H(+) = tetradecanoyl-CoA + NADP(+). It participates in lipid metabolism; fatty acid biosynthesis. Its function is as follows. Participates in chain elongation of fatty acids. Catalyzes the reduction of trans-2-enoyl-CoAs of varying chain lengths from 6:1 to 16:1, having maximum activity with 10:1 CoA. Has no 2,4-dienoyl-CoA reductase activity. This chain is Peroxisomal trans-2-enoyl-CoA reductase, found in Homo sapiens (Human).